The following is a 388-amino-acid chain: Chorismate synthase (388 aa).

Arginine 39 and arginine 45 together coordinate NADP(+). FMN is bound by residues 130–132 (RSS), 251–252 (NA), glycine 296, 311–315 (KPIPT), and arginine 337.

This sequence belongs to the chorismate synthase family. Homotetramer. Requires FMNH2 as cofactor.

The catalysed reaction is 5-O-(1-carboxyvinyl)-3-phosphoshikimate = chorismate + phosphate. The protein operates within metabolic intermediate biosynthesis; chorismate biosynthesis; chorismate from D-erythrose 4-phosphate and phosphoenolpyruvate: step 7/7. In terms of biological role, catalyzes the anti-1,4-elimination of the C-3 phosphate and the C-6 proR hydrogen from 5-enolpyruvylshikimate-3-phosphate (EPSP) to yield chorismate, which is the branch point compound that serves as the starting substrate for the three terminal pathways of aromatic amino acid biosynthesis. This reaction introduces a second double bond into the aromatic ring system. In Streptococcus pneumoniae serotype 19F (strain G54), this protein is Chorismate synthase.